Reading from the N-terminus, the 193-residue chain is Calcium-binding protein E63-1 (193 aa).

4 EF-hand domains span residues 35–70 (VEIK…LGIN), 71–106 (VSDE…IQAL), 127–162 (DVTE…IGEP), and 163–193 (LNEQ…RLLL). Residues Asp48, Asn50, Asp52, Arg54, and Glu59 each contribute to the Ca(2+) site. Asp140, Asp142, Asn144, Glu151, Asp176, Asp178, Asp180, Arg182, and Glu187 together coordinate Ca(2+).

This is Calcium-binding protein E63-1 (Eip63F-1) from Drosophila melanogaster (Fruit fly).